Consider the following 1072-residue polypeptide: Integrin alpha-6 (1072 aa).

The signal sequence occupies residues 1 to 18; sequence MAAALLLYLPLLPGLAGA. The Extracellular segment spans residues 19–1010; that stretch reads FNLDAENVIG…FPAKPVALYT (992 aa). 7 FG-GAP repeats span residues 23–88, 94–160, 170–223, 238–295, 296–357, 358–413, and 414–476; these read AENV…DTRC, DEDT…IKDD, DGRL…FYDL, RQDK…QRAL, SLEH…KWEG, IKPI…GINT, and EPAQ…VQPD. Asn-71 is a glycosylation site (N-linked (GlcNAc...) asparagine). Disulfide bonds link Cys-79–Cys-88, Cys-125–Cys-148, and Cys-169–Cys-182. 2 N-linked (GlcNAc...) asparagine glycosylation sites follow: Asn-217 and Asn-278. 4 residues coordinate Ca(2+): Asp-318, Asn-320, Asp-322, and Asp-326. Asn-364 is a glycosylation site (N-linked (GlcNAc...) asparagine). Ca(2+) contacts are provided by Asp-380, Asn-382, Asp-384, Tyr-386, Asp-388, Asp-438, Asp-440, Asn-442, Tyr-444, and Asp-446. Cys-498 and Cys-557 are oxidised to a cystine. Residues Asn-515 and Asn-609 are each glycosylated (N-linked (GlcNAc...) asparagine). 2 disulfide bridges follow: Cys-625-Cys-631 and Cys-725-Cys-736. N-linked (GlcNAc...) asparagine glycans are attached at residues Asn-730, Asn-747, and Asn-780. 2 disulfide bridges follow: Cys-880-Cys-927 and Cys-933-Cys-938. Asn-957 is a glycosylation site (N-linked (GlcNAc...) asparagine). A helical transmembrane segment spans residues 1011 to 1036; that stretch reads GVPWWIIAVAIFAGVLMLALLVFLLW. The Cytoplasmic portion of the chain corresponds to 1037-1072; the sequence is KCGFFKRSKKDHYDATYHKAEIHAQPSDKERLTSDA. The S-palmitoyl cysteine; by DHHC3 moiety is linked to residue Cys-1038. Positions 1039–1043 match the GFFKR motif motif; that stretch reads GFFKR. Ser-1070 is modified (phosphoserine; by CaMK2).

Belongs to the integrin alpha chain family. Heterodimer of an alpha and a beta subunit. The alpha subunit is composed of a heavy and a light chain linked by a disulfide bond. Alpha-6 associates with either beta-1 (ITGB1) or beta-4 (ITGB4) to form ITGA6:ITGB1 and ITGA6:ITGB4, respectively. Post-translationally, phosphorylated in vivo.

The protein resides in the cell membrane. Integrin alpha-6/beta-1 (ITGA6:ITGB1) is a receptor for laminin on platelets. Integrin alpha-6/beta-1 (ITGA6:ITGB1) is present in oocytes and is involved in sperm-egg fusion. Integrin alpha-6/beta-4 (ITGA6:ITGB4) is a receptor for laminin in epithelial cells and it plays a critical structural role in the hemidesmosome. The sequence is that of Integrin alpha-6 (ITGA6) from Gallus gallus (Chicken).